A 494-amino-acid polypeptide reads, in one-letter code: Cytochrome P450 2A11 (494 aa).

N6-acetyllysine is present on lysine 379. A heme-binding site is contributed by cysteine 439.

Belongs to the cytochrome P450 family. Heme serves as cofactor. Expressed in liver and lung as well as in nasal tissues.

It is found in the endoplasmic reticulum membrane. Its subcellular location is the microsome membrane. The enzyme catalyses an organic molecule + reduced [NADPH--hemoprotein reductase] + O2 = an alcohol + oxidized [NADPH--hemoprotein reductase] + H2O + H(+). In terms of biological role, catalyzes the oxygenation of a variety of substrates, including ethanol and procarcinogens such as N-nitrosodiethylamine and phenacetin. Has no or little activity as a coumarin 7-hydroxylase and in the formation of androstenedione from testosterone. The sequence is that of Cytochrome P450 2A11 (CYP2A11) from Oryctolagus cuniculus (Rabbit).